The following is an 830-amino-acid chain: C-Jun-amino-terminal kinase-interacting protein 2 (830 aa).

Disordered stretches follow at residues 1–26 (MADRAEMFSLSTFHSLSPPGCRPPQD), 44–354 (CGLG…ADSP), 367–438 (EGSS…PGPC), 452–504 (LWAT…GSTA), and 539–574 (GNDSEEDSSCEASEEEAGATLLGSDQVPEDASPDSP). Acidic residues predominate over residues 77-105 (DFQEFEMIDDNEEEDDEEEEEEEEEEEDG). Residues 111–278 (AGGGPGSQAL…RMISSISETE (168 aa)) are JNK-binding domain (JBD). Polar residues predominate over residues 142–172 (LHLTTLGAQDSLNNNNGGFTSAPPSSWQETV). Low complexity-rich tracts occupy residues 176–190 (PAQEPLKELPAPLLP) and 218–227 (ASSGGASPSS). A compositionally biased stretch (basic and acidic residues) spans 233–249 (ADLRSHSSGGHEGRRSS). The tract at residues 242-504 (GHEGRRSSQE…PGSRTTGSTA (263 aa)) is necessary for interaction with FGF13. Phosphoserine occurs at positions 257, 304, and 307. Residues 271–307 (ISSISETELELSSDGGSSSGRSSHLTNSIEEASSPAS) show a composition bias toward low complexity. Residues 333-352 (TNSEYESGSESEPDLSEDAD) are compositionally biased toward acidic residues. Residues 427–437 (APRLGPAQPGP) are compositionally biased toward low complexity. 2 stretches are compositionally biased toward acidic residues: residues 471 to 490 (SEEEEEDEEEDEEDEEDAED) and 541 to 555 (DSEEDSSCEASEEEA). In terms of domain architecture, SH3 spans 610-671 (EREQTHRAVF…PAFYAHAVPG (62 aa)). The region spanning 683–819 (PCWVDRFDVQ…FLEYYQEHLA (137 aa)) is the PID domain.

Belongs to the JIP scaffold family. As to quaternary structure, forms homo- or heterooligomeric complexes. Binds specific components of the JNK signaling pathway namely JNK1, JNK2, JNK3, MAP2K7, MAP3K10, MAP3K11, MAP3K12 and MAPK13. Also binds the proline-rich domain-containing splice variant of apolipoprotein E receptor 2 (ApoER2). Binds the TPR motif-containing C-terminal of kinesin light chain. Binds the cytoplasmic tails of LRP1 and LRP2 (Megalin). Interacts with DCLK2. Interacts with FGF13; enables the interaction with MAPK13 and may regulate the MAPK8IP2 scaffolding activity. Interacts with TIAM1 and TIAM2. Interacts with SH3RF2. In terms of tissue distribution, highly expressed in brain. Expressed in all neurons. Also expressed in testis, primarily in the epididymal epidermis.

It is found in the cytoplasm. The JNK-interacting protein (JIP) group of scaffold proteins selectively mediates JNK signaling by aggregating specific components of the MAPK cascade to form a functional JNK signaling module. JIP2 inhibits IL1 beta-induced apoptosis in insulin-secreting cells. The polypeptide is C-Jun-amino-terminal kinase-interacting protein 2 (Mapk8ip2) (Mus musculus (Mouse)).